The chain runs to 297 residues: Large ribosomal subunit protein uL3 (297 aa).

2 disordered regions span residues 124-143 (NQKIGPKSHGGGGGSKPVRQ) and 258-297 (MKEKEKLEQEAKQNAEKSNSDDDVRKEAEKLNKNKEDKGE).

The protein belongs to the universal ribosomal protein uL3 family. As to quaternary structure, part of the 50S ribosomal subunit. Forms a cluster with proteins L14 and L19.

Its function is as follows. One of the primary rRNA binding proteins, it binds directly near the 3'-end of the 23S rRNA, where it nucleates assembly of the 50S subunit. The chain is Large ribosomal subunit protein uL3 from Mycoplasma mobile (strain ATCC 43663 / 163K / NCTC 11711) (Mesomycoplasma mobile).